The following is a 248-amino-acid chain: MSSDKANNQSPDQGANTPAESTNSGPKLDGNQAVNLAAEQSKSTADKNLPVFGDLPIPEDTANLRFGPNLHDGLLALLPLVGVWRGQGQAAHPGEEEFTFGQQLSIFHDGENRLGFESRTWKINPPAEEGAEADGDEASAESAGEPEVGELLRREAGFWRIDNDDNIELLIAHSDGMIELMYGKPLTERAWQLESASTLATETGPSALGPGKRLYGLMPNNDLGWVDERLIDGEMVPWMSAQLKRVRG.

Composition is skewed to polar residues over residues 1–25 and 32–43; these read MSSDKANNQSPDQGANTPAESTNSG and QAVNLAAEQSKS. Residues 1–49 are disordered; sequence MSSDKANNQSPDQGANTPAESTNSGPKLDGNQAVNLAAEQSKSTADKNL. The short motif at 82-88 is the GXWXGXG element; sequence GVWRGQG. Residues 118-147 are disordered; that stretch reads SRTWKINPPAEEGAEADGDEASAESAGEPE. A compositionally biased stretch (acidic residues) spans 129 to 139; that stretch reads EGAEADGDEAS.

Belongs to the nitrobindin family.

In Corynebacterium urealyticum (strain ATCC 43042 / DSM 7109), this protein is Ferric nitrobindin-like protein.